The chain runs to 134 residues: MLSPKRTKFRKPHRGRLRGIATRGNTLIFGDYGLQALEPIWLTSRQIEATRRTITRQVKRVGRLWIRVFPDKSISAKPPETRMGAGKGAPEYWVAVIKPGHILFEINGVSQDLRYLAFKNASYKLPIKTKFISR.

This sequence belongs to the universal ribosomal protein uL16 family. Part of the 50S ribosomal subunit.

The protein localises to the plastid. It is found in the chloroplast. In Guillardia theta (Cryptophyte), this protein is Large ribosomal subunit protein uL16c.